A 227-amino-acid polypeptide reads, in one-letter code: 2,3-bisphosphoglycerate-dependent phosphoglycerate mutase (227 aa).

Substrate contacts are provided by residues 8-15 (RHGKSVWN), 21-22 (TG), R58, 110-113 (ERMY), K121, 137-138 (RR), and 181-182 (GN). The active-site Tele-phosphohistidine intermediate is H9. E110 functions as the Proton donor/acceptor in the catalytic mechanism.

The protein belongs to the phosphoglycerate mutase family. BPG-dependent PGAM subfamily.

The catalysed reaction is (2R)-2-phosphoglycerate = (2R)-3-phosphoglycerate. It functions in the pathway carbohydrate degradation; glycolysis; pyruvate from D-glyceraldehyde 3-phosphate: step 3/5. In terms of biological role, catalyzes the interconversion of 2-phosphoglycerate and 3-phosphoglycerate. In Chlamydia abortus (strain DSM 27085 / S26/3) (Chlamydophila abortus), this protein is 2,3-bisphosphoglycerate-dependent phosphoglycerate mutase.